A 465-amino-acid polypeptide reads, in one-letter code: VGFKAGVKDYKLTYYTPEYVTKDTDILAAFRVTPQPGVPPEEAGAAVAAESSTGTWTTVWTDGLTSLDRYKGRCYNIEPVAGEENQYICYVAYPLDLFEEGSVTNMFTSIVGNVFGFKALRALRLEDLRIPPAYSKTFQGPPHGIQVERDKLNKYGRPLLGCTIKPKLGLSAKNYGRAVYECLRGGLDFTKDDENVNSQPFMRWRDRFLFCAEAIFKSQAETGEIKGHYLNATAGTCEEMIKRAVFARELGVPIVMHDYLTGGFTANTSLAHYCRDNGLLLHIHRAMHAVIDRQKNHGMHFRVLAKALRMSGGDHIHAGTVVGKLEGERDITLGFVDLLRDDFIEKDRSRGIYFTQDWVSLPGVLPVASGGIHVWHMPALTEIFGDDSVLQFGGGTLGHPWGNAPGAVANRVALEACVQARNEGRDLAREGNEIIREASKWSAELAAACEVWKEIKFQFEAMDTL.

K4 carries the post-translational modification N6,N6,N6-trimethyllysine. Substrate-binding residues include N113 and T163. Residue K165 is the Proton acceptor of the active site. K167 serves as a coordination point for substrate. 3 residues coordinate Mg(2+): K191, D193, and E194. K191 bears the N6-carboxylysine mark. H284 acts as the Proton acceptor in catalysis. R285, H317, and S369 together coordinate substrate.

Belongs to the RuBisCO large chain family. Type I subfamily. As to quaternary structure, heterohexadecamer of 8 large chains and 8 small chains; disulfide-linked. The disulfide link is formed within the large subunit homodimers. Mg(2+) is required as a cofactor. Post-translationally, the disulfide bond which can form in the large chain dimeric partners within the hexadecamer appears to be associated with oxidative stress and protein turnover.

The protein resides in the plastid. Its subcellular location is the chloroplast. It catalyses the reaction 2 (2R)-3-phosphoglycerate + 2 H(+) = D-ribulose 1,5-bisphosphate + CO2 + H2O. The enzyme catalyses D-ribulose 1,5-bisphosphate + O2 = 2-phosphoglycolate + (2R)-3-phosphoglycerate + 2 H(+). Functionally, ruBisCO catalyzes two reactions: the carboxylation of D-ribulose 1,5-bisphosphate, the primary event in carbon dioxide fixation, as well as the oxidative fragmentation of the pentose substrate in the photorespiration process. Both reactions occur simultaneously and in competition at the same active site. This chain is Ribulose bisphosphate carboxylase large chain, found in Acer saccharum (Sugar maple).